The sequence spans 537 residues: CTP synthase (537 aa).

Residues 1–267 (MTKYIFVTGG…DQIVCDHLKL (267 aa)) are amidoligase domain. Ser13 is a binding site for CTP. Ser13 is a binding site for UTP. ATP is bound at residue 14-19 (SIGKGI). Position 54 (Tyr54) interacts with L-glutamine. Asp71 lines the ATP pocket. The Mg(2+) site is built by Asp71 and Glu141. CTP is bound by residues 148–150 (DIE), 188–193 (KTKPTQ), and Lys224. UTP contacts are provided by residues 188–193 (KTKPTQ) and Lys224. Residue 240-242 (RDV) participates in ATP binding. In terms of domain architecture, Glutamine amidotransferase type-1 spans 292-535 (RIALVGKYVE…VTAAVKNKNQ (244 aa)). L-glutamine is bound at residue Gly354. Catalysis depends on Cys381, which acts as the Nucleophile; for glutamine hydrolysis. L-glutamine-binding positions include 382 to 385 (LGMQ), Glu405, and Arg463. Catalysis depends on residues His508 and Glu510.

This sequence belongs to the CTP synthase family. Homotetramer.

The catalysed reaction is UTP + L-glutamine + ATP + H2O = CTP + L-glutamate + ADP + phosphate + 2 H(+). It catalyses the reaction L-glutamine + H2O = L-glutamate + NH4(+). It carries out the reaction UTP + NH4(+) + ATP = CTP + ADP + phosphate + 2 H(+). It participates in pyrimidine metabolism; CTP biosynthesis via de novo pathway; CTP from UDP: step 2/2. With respect to regulation, allosterically activated by GTP, when glutamine is the substrate; GTP has no effect on the reaction when ammonia is the substrate. The allosteric effector GTP functions by stabilizing the protein conformation that binds the tetrahedral intermediate(s) formed during glutamine hydrolysis. Inhibited by the product CTP, via allosteric rather than competitive inhibition. Catalyzes the ATP-dependent amination of UTP to CTP with either L-glutamine or ammonia as the source of nitrogen. Regulates intracellular CTP levels through interactions with the four ribonucleotide triphosphates. The polypeptide is CTP synthase (Streptococcus equi subsp. equi (strain 4047)).